The chain runs to 402 residues: Type II NADH:quinone oxidoreductase (402 aa).

FAD-binding positions include 12–16 (GAGYA), 39–40 (NK), and valine 83. Residue glutamate 172 is part of the active site. FAD-binding positions include aspartate 302, 319 to 320 (AQ), and lysine 379.

The protein belongs to the NADH dehydrogenase family. FAD serves as cofactor.

It is found in the cell membrane. It catalyses the reaction a quinone + NADH + H(+) = a quinol + NAD(+). Alternative, nonproton pumping NADH:quinone oxidoreductase that delivers electrons to the respiratory chain by oxidation of NADH and reduction of quinones, and contributes to the regeneration of NAD(+). The chain is Type II NADH:quinone oxidoreductase from Staphylococcus haemolyticus (strain JCSC1435).